The chain runs to 740 residues: Phosphoribosylformylglycinamidine synthase subunit PurL (740 aa).

The active site involves His-50. 2 residues coordinate ATP: Tyr-53 and Lys-92. Mg(2+) is bound at residue Glu-94. Substrate is bound by residues 95-98 (SHNH) and Arg-117. Catalysis depends on His-96, which acts as the Proton acceptor. Position 118 (Asp-118) interacts with Mg(2+). Residue Gln-241 coordinates substrate. Asp-269 contacts Mg(2+). Residue 313–315 (ESQ) participates in substrate binding. Residues Asp-495 and Gly-532 each coordinate ATP. Position 533 (Asn-533) interacts with Mg(2+). Residue Ser-535 coordinates substrate.

This sequence belongs to the FGAMS family. Monomer. Part of the FGAM synthase complex composed of 1 PurL, 1 PurQ and 2 PurS subunits.

The protein resides in the cytoplasm. The enzyme catalyses N(2)-formyl-N(1)-(5-phospho-beta-D-ribosyl)glycinamide + L-glutamine + ATP + H2O = 2-formamido-N(1)-(5-O-phospho-beta-D-ribosyl)acetamidine + L-glutamate + ADP + phosphate + H(+). It participates in purine metabolism; IMP biosynthesis via de novo pathway; 5-amino-1-(5-phospho-D-ribosyl)imidazole from N(2)-formyl-N(1)-(5-phospho-D-ribosyl)glycinamide: step 1/2. In terms of biological role, part of the phosphoribosylformylglycinamidine synthase complex involved in the purines biosynthetic pathway. Catalyzes the ATP-dependent conversion of formylglycinamide ribonucleotide (FGAR) and glutamine to yield formylglycinamidine ribonucleotide (FGAM) and glutamate. The FGAM synthase complex is composed of three subunits. PurQ produces an ammonia molecule by converting glutamine to glutamate. PurL transfers the ammonia molecule to FGAR to form FGAM in an ATP-dependent manner. PurS interacts with PurQ and PurL and is thought to assist in the transfer of the ammonia molecule from PurQ to PurL. This is Phosphoribosylformylglycinamidine synthase subunit PurL from Brucella abortus (strain S19).